A 953-amino-acid polypeptide reads, in one-letter code: Atromentin synthetase invA5 (953 aa).

The interval 37-460 is adenylation (A) domain; it reads SRAVSQYPDH…SGRIKDTVIV (424 aa). The Carrier domain occupies 592-670; the sequence is APSTETEKTL…SLAKYVDSLI (79 aa). Residues 597–667 are thiolation and peptide carrier (T) domain; that stretch reads TEKTLAGIYA…VISSLAKYVD (71 aa). Position 629 is an O-(pantetheine 4'-phosphoryl)serine (Ser629). A thioesterase (TE) domain region spans residues 693 to 795; the sequence is PIFMVHPGVG…FTGLINIPPN (103 aa).

The protein belongs to the ATP-dependent AMP-binding enzyme family.

It participates in secondary metabolite biosynthesis. An L-tyrosine:2-oxoglutarate aminotransferase (probably invD) and atromentin synthetase invA5 catalyze consecutive steps to turn over L-tyrosine into atromentin, which represents the generic precursor molecule for the entire terphenylquinone and pulvinic acid family of pigments, which are widely distributed secondary metabolites in homobasidiomycetes. The first step catalyzed by the aminotransferase converts L-tyrosine in to 4-hydroxyphenylpyruvate (4-HPP). Adenylation of two 4-HPP monomers by the invA5 adenylation (A) domain, covalent tethering of the monomers as a thioester and oxoester onto the invA5 thiolation (T) and thioesterase (TE) domains, respectively, and symmetric C-C-bond formation between two monomers catalyzed by the invA5 TE domain leads to atromentin. The protein is Atromentin synthetase invA5 (invA5) of Paxillus involutus (Naked brimcap).